Here is a 188-residue protein sequence, read N- to C-terminus: Pyridoxal 5'-phosphate synthase subunit PdxT (188 aa).

47–49 lines the L-glutamine pocket; the sequence is GES. Residue C79 is the Nucleophile of the active site. L-glutamine contacts are provided by residues R105 and 134-135; that span reads IR. Catalysis depends on charge relay system residues H170 and E172.

Belongs to the glutaminase PdxT/SNO family. As to quaternary structure, in the presence of PdxS, forms a dodecamer of heterodimers. Only shows activity in the heterodimer.

It catalyses the reaction aldehydo-D-ribose 5-phosphate + D-glyceraldehyde 3-phosphate + L-glutamine = pyridoxal 5'-phosphate + L-glutamate + phosphate + 3 H2O + H(+). It carries out the reaction L-glutamine + H2O = L-glutamate + NH4(+). The protein operates within cofactor biosynthesis; pyridoxal 5'-phosphate biosynthesis. Catalyzes the hydrolysis of glutamine to glutamate and ammonia as part of the biosynthesis of pyridoxal 5'-phosphate. The resulting ammonia molecule is channeled to the active site of PdxS. The chain is Pyridoxal 5'-phosphate synthase subunit PdxT from Listeria welshimeri serovar 6b (strain ATCC 35897 / DSM 20650 / CCUG 15529 / CIP 8149 / NCTC 11857 / SLCC 5334 / V8).